A 127-amino-acid chain; its full sequence is Small ribosomal subunit protein bS6 (127 aa).

The tract at residues 99-127 (PSPMMKEEKSKSMMPGDAAPAAPAETAAA) is disordered. The segment covering 110–127 (SMMPGDAAPAAPAETAAA) has biased composition (low complexity).

It belongs to the bacterial ribosomal protein bS6 family.

In terms of biological role, binds together with bS18 to 16S ribosomal RNA. The protein is Small ribosomal subunit protein bS6 of Dechloromonas aromatica (strain RCB).